We begin with the raw amino-acid sequence, 116 residues long: Large ribosomal subunit protein bL17 (116 aa).

It belongs to the bacterial ribosomal protein bL17 family. Part of the 50S ribosomal subunit. Contacts protein L32.

This chain is Large ribosomal subunit protein bL17, found in Prochlorococcus marinus (strain NATL2A).